We begin with the raw amino-acid sequence, 340 residues long: Photosystem II protein D1 (340 aa).

3 helical membrane passes run 25–42 (YIGW…LATV), 114–129 (HFFL…EWEF), and 138–152 (WIFV…AAAA). H114 serves as a coordination point for chlorophyll a. A pheophytin a-binding site is contributed by W122. Positions 166 and 185 each coordinate [CaMn4O5] cluster. The chain crosses the membrane as a helical span at residues 193–214 (FHILGVAGVFGGSLFSAMHGSL). Residue H194 participates in chlorophyll a binding. A quinone contacts are provided by residues H211 and 260–261 (SF). H211 contacts Fe cation. H268 provides a ligand contact to Fe cation. The chain crosses the membrane as a helical span at residues 270–284 (FLAAWPVIGIWFTSL). Positions 328, 329, 338, and 340 each coordinate [CaMn4O5] cluster.

This sequence belongs to the reaction center PufL/M/PsbA/D family. In terms of assembly, PSII is composed of 1 copy each of membrane proteins PsbA, PsbB, PsbC, PsbD, PsbE, PsbF, PsbH, PsbI, PsbJ, PsbK, PsbL, PsbM, PsbT, PsbX, PsbY, PsbZ, Psb30/Ycf12, at least 3 peripheral proteins of the oxygen-evolving complex and a large number of cofactors. It forms dimeric complexes. It depends on The D1/D2 heterodimer binds P680, chlorophylls that are the primary electron donor of PSII, and subsequent electron acceptors. It shares a non-heme iron and each subunit binds pheophytin, quinone, additional chlorophylls, carotenoids and lipids. D1 provides most of the ligands for the Mn4-Ca-O5 cluster of the oxygen-evolving complex (OEC). There is also a Cl(-1) ion associated with D1 and D2, which is required for oxygen evolution. The PSII complex binds additional chlorophylls, carotenoids and specific lipids. as a cofactor. In terms of processing, tyr-157 forms a radical intermediate that is referred to as redox-active TyrZ, YZ or Y-Z.

It localises to the plastid. Its subcellular location is the chloroplast thylakoid membrane. The catalysed reaction is 2 a plastoquinone + 4 hnu + 2 H2O = 2 a plastoquinol + O2. Functionally, photosystem II (PSII) is a light-driven water:plastoquinone oxidoreductase that uses light energy to abstract electrons from H(2)O, generating O(2) and a proton gradient subsequently used for ATP formation. It consists of a core antenna complex that captures photons, and an electron transfer chain that converts photonic excitation into a charge separation. The D1/D2 (PsbA/PsbD) reaction center heterodimer binds P680, the primary electron donor of PSII as well as several subsequent electron acceptors. In Amphidinium operculatum (Dinoflagellate), this protein is Photosystem II protein D1.